The chain runs to 111 residues: MGSSFSGSTEFSAPAPPTVSTAVPANPPAKSAVPASPARDPELKTCWSCRVLSGSTLFGAGTYVYLVARRPLKQGIPPGPGTVLQMVIGISIACWGVVVLVDPKGKSHPVI.

Over residues 1 to 11 the composition is skewed to polar residues; it reads MGSSFSGSTEF. Residues 1–40 are disordered; the sequence is MGSSFSGSTEFSAPAPPTVSTAVPANPPAKSAVPASPARD. The span at 18–38 shows a compositional bias: low complexity; that stretch reads TVSTAVPANPPAKSAVPASPA. 2 helical membrane-spanning segments follow: residues 51 to 68 and 81 to 101; these read VLSG…YLVA and GTVL…VVLV.

Interacts with incompletely assembled mitochondrial NADH:ubiquinone oxidoreductase complex (complex I).

It localises to the mitochondrion inner membrane. Required for the assembly of the mitochondrial NADH:ubiquinone oxidoreductase complex (complex I). Involved in the assembly of the distal region of complex I. The sequence is that of Distal membrane-arm assembly complex protein 1 from Mus musculus (Mouse).